The sequence spans 302 residues: MRIVLITGISGSGKSVALNALEDAGYYCVDNLPPHVLPELARYLADGGQHRLAVAIDARSSASLDELPGLIRSLSLEHDVRVLFLNASTQALIQRFSETRRRHPLSGSPSHDANIGLLSSLEEAIERERDLVAPLAEFGHQIDTSTLRANVLRTWVKRFIEQKNNDLMVMFESFGFKRGVPLDADLMFDVRALPNPYYDHELRPLTGLDQPVIAFLDALPIVHQMIDDIHAFLMKWLPHFREDNRSYLTVAIGCTGGQHRSVFIAETLAARLAHDANVIVRHRDAPVDVDASSRLVTEVDRP.

8–15 (GISGSGKS) contacts ATP. A GTP-binding site is contributed by 57–60 (DARS).

The protein belongs to the RapZ-like family.

Functionally, displays ATPase and GTPase activities. This chain is Nucleotide-binding protein Bamb_2855, found in Burkholderia ambifaria (strain ATCC BAA-244 / DSM 16087 / CCUG 44356 / LMG 19182 / AMMD) (Burkholderia cepacia (strain AMMD)).